Reading from the N-terminus, the 542-residue chain is CTP synthase (542 aa).

Residues methionine 1–isoleucine 265 are amidoligase domain. Serine 13 is a binding site for CTP. Serine 13 lines the UTP pocket. Serine 14–isoleucine 19 is a binding site for ATP. Residue tyrosine 54 participates in L-glutamine binding. Aspartate 71 contacts ATP. The Mg(2+) site is built by aspartate 71 and glutamate 139. CTP-binding positions include aspartate 146–glutamate 148, lysine 186–glutamine 191, and lysine 222. Residues lysine 186–glutamine 191 and lysine 222 contribute to the UTP site. In terms of domain architecture, Glutamine amidotransferase type-1 spans threonine 291 to leucine 541. Position 353 (glycine 353) interacts with L-glutamine. The active-site Nucleophile; for glutamine hydrolysis is the cysteine 380. Residues phenylalanine 381 to glutamine 384, glutamate 404, and arginine 469 each bind L-glutamine. Active-site residues include histidine 514 and glutamate 516.

It belongs to the CTP synthase family. As to quaternary structure, homotetramer.

It carries out the reaction UTP + L-glutamine + ATP + H2O = CTP + L-glutamate + ADP + phosphate + 2 H(+). The enzyme catalyses L-glutamine + H2O = L-glutamate + NH4(+). The catalysed reaction is UTP + NH4(+) + ATP = CTP + ADP + phosphate + 2 H(+). Its pathway is pyrimidine metabolism; CTP biosynthesis via de novo pathway; CTP from UDP: step 2/2. Its activity is regulated as follows. Allosterically activated by GTP, when glutamine is the substrate; GTP has no effect on the reaction when ammonia is the substrate. The allosteric effector GTP functions by stabilizing the protein conformation that binds the tetrahedral intermediate(s) formed during glutamine hydrolysis. Inhibited by the product CTP, via allosteric rather than competitive inhibition. Catalyzes the ATP-dependent amination of UTP to CTP with either L-glutamine or ammonia as the source of nitrogen. Regulates intracellular CTP levels through interactions with the four ribonucleotide triphosphates. The sequence is that of CTP synthase from Brucella anthropi (strain ATCC 49188 / DSM 6882 / CCUG 24695 / JCM 21032 / LMG 3331 / NBRC 15819 / NCTC 12168 / Alc 37) (Ochrobactrum anthropi).